The following is a 128-amino-acid chain: MARKKNTKRKVKKNVPLGIAHIHTTFNNTIVTITDLNGNAVTWSSAGALGFKGSRKSTPFAAQLAAEAVAKAAMEHGMVKVETFITGPGPGREAAIRSLQAAGLEITAIKDVTAVPHNGCRPPKPPRG.

It belongs to the universal ribosomal protein uS11 family. In terms of assembly, part of the 30S ribosomal subunit. Interacts with proteins S7 and S18. Binds to IF-3.

Functionally, located on the platform of the 30S subunit, it bridges several disparate RNA helices of the 16S rRNA. Forms part of the Shine-Dalgarno cleft in the 70S ribosome. The polypeptide is Small ribosomal subunit protein uS11 (Aster yellows witches'-broom phytoplasma (strain AYWB)).